The following is a 145-amino-acid chain: 3-hydroxyacyl-[acyl-carrier-protein] dehydratase FabZ (145 aa).

His-48 is an active-site residue.

The protein belongs to the thioester dehydratase family. FabZ subfamily.

It localises to the cytoplasm. It catalyses the reaction a (3R)-hydroxyacyl-[ACP] = a (2E)-enoyl-[ACP] + H2O. In terms of biological role, involved in unsaturated fatty acids biosynthesis. Catalyzes the dehydration of short chain beta-hydroxyacyl-ACPs and long chain saturated and unsaturated beta-hydroxyacyl-ACPs. This is 3-hydroxyacyl-[acyl-carrier-protein] dehydratase FabZ from Stutzerimonas stutzeri (strain A1501) (Pseudomonas stutzeri).